The following is a 172-amino-acid chain: Adenine phosphoribosyltransferase (172 aa).

Belongs to the purine/pyrimidine phosphoribosyltransferase family. As to quaternary structure, homodimer.

It is found in the cytoplasm. It catalyses the reaction AMP + diphosphate = 5-phospho-alpha-D-ribose 1-diphosphate + adenine. Its pathway is purine metabolism; AMP biosynthesis via salvage pathway; AMP from adenine: step 1/1. Its function is as follows. Catalyzes a salvage reaction resulting in the formation of AMP, that is energically less costly than de novo synthesis. The chain is Adenine phosphoribosyltransferase from Anaeromyxobacter dehalogenans (strain 2CP-C).